A 302-amino-acid chain; its full sequence is Sulfate adenylyltransferase subunit 2 (302 aa).

Positions 280–302 (RQGRLIDSDQSASMEQKKRQGYF) are disordered.

The protein belongs to the PAPS reductase family. CysD subfamily. Heterodimer composed of CysD, the smaller subunit, and CysN.

It carries out the reaction sulfate + ATP + H(+) = adenosine 5'-phosphosulfate + diphosphate. The protein operates within sulfur metabolism; hydrogen sulfide biosynthesis; sulfite from sulfate: step 1/3. Its function is as follows. With CysN forms the ATP sulfurylase (ATPS) that catalyzes the adenylation of sulfate producing adenosine 5'-phosphosulfate (APS) and diphosphate, the first enzymatic step in sulfur assimilation pathway. APS synthesis involves the formation of a high-energy phosphoric-sulfuric acid anhydride bond driven by GTP hydrolysis by CysN coupled to ATP hydrolysis by CysD. The polypeptide is Sulfate adenylyltransferase subunit 2 (Shewanella putrefaciens (strain CN-32 / ATCC BAA-453)).